The following is a 363-amino-acid chain: Peroxisomal (S)-2-hydroxyacid oxidase GLO4 (363 aa).

The region spanning 1 to 357 is the FMN hydroxy acid dehydrogenase domain; sequence MDQIVNVDEF…TRNHVRTENE (357 aa). FMN-binding positions include 78–80, serine 107, 128–130, and threonine 156; these read PTA and QIY. Tyrosine 130 contributes to the a 2-oxocarboxylate binding site. Position 165 (arginine 165) interacts with a 2-oxocarboxylate. FMN is bound by residues lysine 228 and serine 250. Histidine 252 acts as the Proton acceptor in catalysis. Arginine 255 is an a 2-oxocarboxylate binding site. FMN contacts are provided by residues 283-287 and 306-307; these read DGGVR and GR. Positions 361 to 363 match the Microbody targeting signal motif; it reads SML.

This sequence belongs to the FMN-dependent alpha-hydroxy acid dehydrogenase family. Homotetramer. It depends on FMN as a cofactor.

It localises to the peroxisome. It carries out the reaction a (2S)-2-hydroxycarboxylate + O2 = a 2-oxocarboxylate + H2O2. It catalyses the reaction 2-hydroxydodecanoate + O2 = 2-oxododecanoate + H2O2. The enzyme catalyses 2-hydroxyhexanoate + O2 = 2-oxohexanoate + H2O2. The catalysed reaction is 2-hydroxyoctanoate + O2 = 2-oxooctanoate + H2O2. It carries out the reaction (S)-lactate + O2 = pyruvate + H2O2. It functions in the pathway lipid metabolism; fatty acid metabolism. Functionally, oxidase that catalyzes the oxidation of a broad range of 2-hydroxyacids to the corresponding 2-oxoacids, with a reduction of O2 to H2O2. Displays the highest activity with the long-chain fatty acid 2-hydroxydodecanoate and has intermediate activity with 2-hydroxyhexanoate, 2-hydroxyoctanote, and the short-chain hydroxyacid (S)-lactate (L-lactate). With much lower activity, it can also use glycolate, leucic acid, valic acid, and isoleucic acid as substrates in vitro. Cannot use 2-hydroxyhexadecanoate or D-lactate as substrates. May be involved in a general medium- and long-chain fatty acid catabolic pathway such as alpha-oxidation. The chain is Peroxisomal (S)-2-hydroxyacid oxidase GLO4 (GLO4) from Arabidopsis thaliana (Mouse-ear cress).